Consider the following 216-residue polypeptide: Pyridoxine/pyridoxamine 5'-phosphate oxidase (216 aa).

Residues 12 to 15 and Lys-70 each bind substrate; that span reads RREY. FMN contacts are provided by residues 65–70, 80–81, Arg-86, Lys-87, and Gln-109; these read RLVLLK and YT. Positions 127, 131, and 135 each coordinate substrate. FMN contacts are provided by residues 144–145 and Trp-189; that span reads QS. 195-197 contacts substrate; that stretch reads RMH. Arg-199 is an FMN binding site.

Belongs to the pyridoxamine 5'-phosphate oxidase family. As to quaternary structure, homodimer. FMN serves as cofactor.

The enzyme catalyses pyridoxamine 5'-phosphate + O2 + H2O = pyridoxal 5'-phosphate + H2O2 + NH4(+). It carries out the reaction pyridoxine 5'-phosphate + O2 = pyridoxal 5'-phosphate + H2O2. Its pathway is cofactor metabolism; pyridoxal 5'-phosphate salvage; pyridoxal 5'-phosphate from pyridoxamine 5'-phosphate: step 1/1. The protein operates within cofactor metabolism; pyridoxal 5'-phosphate salvage; pyridoxal 5'-phosphate from pyridoxine 5'-phosphate: step 1/1. Its function is as follows. Catalyzes the oxidation of either pyridoxine 5'-phosphate (PNP) or pyridoxamine 5'-phosphate (PMP) into pyridoxal 5'-phosphate (PLP). This Sodalis glossinidius (strain morsitans) protein is Pyridoxine/pyridoxamine 5'-phosphate oxidase.